Consider the following 512-residue polypeptide: Activin receptor type-2B (512 aa).

An N-terminal signal peptide occupies residues 1 to 24 (MSASWLTLAVLCATLGAGPGHGEA). Topologically, residues 25–137 (ETRECIYYNA…PPPPTPSLLN (113 aa)) are extracellular. Cystine bridges form between Cys29–Cys59, Cys49–Cys77, Cys84–Cys103, Cys90–Cys102, and Cys104–Cys109. 2 N-linked (GlcNAc...) asparagine glycosylation sites follow: Asn42 and Asn65. A helical membrane pass occupies residues 138–158 (ILVYSLLPIAVLSVAILLAFW). The Cytoplasmic portion of the chain corresponds to 159–512 (MYRHRKPPYG…VDLPPKESSI (354 aa)). The Protein kinase domain occupies 190–478 (LQLLEIKARG…LSAGCVEERI (289 aa)). ATP-binding positions include 196 to 204 (KARGRFGCV) and Lys217. Asp321 acts as the Proton acceptor in catalysis.

Belongs to the protein kinase superfamily. TKL Ser/Thr protein kinase family. TGFB receptor subfamily. Mg(2+) is required as a cofactor. The cofactor is Mn(2+). Not expressed in hen anterior pituitary during the ovulatory cycle but expressed in the ovarian follicle.

It is found in the membrane. It catalyses the reaction L-threonyl-[receptor-protein] + ATP = O-phospho-L-threonyl-[receptor-protein] + ADP + H(+). It carries out the reaction L-seryl-[receptor-protein] + ATP = O-phospho-L-seryl-[receptor-protein] + ADP + H(+). Its function is as follows. On ligand binding, forms a receptor complex consisting of two type II and two type I transmembrane serine/threonine kinases. Type II receptors phosphorylate and activate type I receptors which autophosphorylate, then bind and activate SMAD transcriptional regulators. Receptor for activin A, activin B and inhibin A. May modulate neuropeptide expression in dorsal root ganglia (DRG) neurons and ovarian follicle development. The chain is Activin receptor type-2B (ACVR2B) from Gallus gallus (Chicken).